The sequence spans 241 residues: 1-(5-phosphoribosyl)-5-[(5-phosphoribosylamino)methylideneamino] imidazole-4-carboxamide isomerase (241 aa).

Residue D10 is the Proton acceptor of the active site. The Proton donor role is filled by D129.

It belongs to the HisA/HisF family.

It is found in the cytoplasm. It catalyses the reaction 1-(5-phospho-beta-D-ribosyl)-5-[(5-phospho-beta-D-ribosylamino)methylideneamino]imidazole-4-carboxamide = 5-[(5-phospho-1-deoxy-D-ribulos-1-ylimino)methylamino]-1-(5-phospho-beta-D-ribosyl)imidazole-4-carboxamide. The protein operates within amino-acid biosynthesis; L-histidine biosynthesis; L-histidine from 5-phospho-alpha-D-ribose 1-diphosphate: step 4/9. This chain is 1-(5-phosphoribosyl)-5-[(5-phosphoribosylamino)methylideneamino] imidazole-4-carboxamide isomerase, found in Salinispora arenicola (strain CNS-205).